Reading from the N-terminus, the 370-residue chain is Cathepsin B-like cysteine proteinase 3 (370 aa).

An N-terminal signal peptide occupies residues 1–16 (MLKVYFLALFLAGCSA). A propeptide spanning residues 17-91 (FVLDEIRGIN…FVRGEIVPEP (75 aa)) is cleaved from the precursor. 6 disulfides stabilise this stretch: cysteine 105–cysteine 134, cysteine 117–cysteine 162, cysteine 153–cysteine 210, cysteine 154–cysteine 158, cysteine 190–cysteine 214, and cysteine 198–cysteine 202. Residue cysteine 120 is part of the active site. Asparagine 138 is a glycosylation site (N-linked (GlcNAc...) asparagine). Catalysis depends on residues histidine 284 and asparagine 304.

The protein belongs to the peptidase C1 family.

The chain is Cathepsin B-like cysteine proteinase 3 (cpr-3) from Caenorhabditis elegans.